The following is a 627-amino-acid chain: CTP synthase (627 aa).

Residues 300-554 (CIAVVGKYTK…LASVDRLNQY (255 aa)) enclose the Glutamine amidotransferase type-1 domain. Catalysis depends on for GATase activity residues Cys399, His526, and Glu528. Phosphoserine is present on residues Ser567, Ser570, Ser571, and Ser588. Residue Thr595 is modified to Phosphothreonine. Positions 599 to 613 (GISKSCNGSISTSDS) are enriched in polar residues. A disordered region spans residues 599-627 (GISKSCNGSISTSDSEGACGGVDPTNGHK).

The protein belongs to the CTP synthase family. As to expression, in ovary, expressed in oocytes, follicle cells and nurse cells. Also expressed in larval and adult testis (at protein level). In larvae, expressed in lymph gland, salivary gland, regions of the midgut, testis, optical lobe and trachea. Isoform 1 is expressed in adult testis, ovary, accessory gland and head. Isoform 2 is weakly expressed in ovary.

It is found in the cytoplasm. It catalyses the reaction UTP + L-glutamine + ATP + H2O = CTP + L-glutamate + ADP + phosphate + 2 H(+). It functions in the pathway pyrimidine metabolism; CTP biosynthesis via de novo pathway; CTP from UDP: step 2/2. Catalyzes the ATP-dependent amination of UTP to CTP with either L-glutamine or ammonia as the source of nitrogen. Constitutes the rate-limiting enzyme in the synthesis of cytosine nucleotides. In terms of biological role, required for assembly of cytoophidium in female germline cells. In nurse cells, CTPsyn filament assembly in the cytoophidium is regulated by Ack kinase which may thereby contribute to the control of CTP production at specific stages of oogenesis and development of the nurse cell membrane. This is CTP synthase from Drosophila melanogaster (Fruit fly).